The sequence spans 350 residues: S-adenosylmethionine:tRNA ribosyltransferase-isomerase (350 aa).

This sequence belongs to the QueA family. In terms of assembly, monomer.

Its subcellular location is the cytoplasm. It catalyses the reaction 7-aminomethyl-7-carbaguanosine(34) in tRNA + S-adenosyl-L-methionine = epoxyqueuosine(34) in tRNA + adenine + L-methionine + 2 H(+). Its pathway is tRNA modification; tRNA-queuosine biosynthesis. Transfers and isomerizes the ribose moiety from AdoMet to the 7-aminomethyl group of 7-deazaguanine (preQ1-tRNA) to give epoxyqueuosine (oQ-tRNA). This Vibrio parahaemolyticus serotype O3:K6 (strain RIMD 2210633) protein is S-adenosylmethionine:tRNA ribosyltransferase-isomerase.